Consider the following 566-residue polypeptide: Proline--tRNA ligase 1 (566 aa).

Belongs to the class-II aminoacyl-tRNA synthetase family. ProS type 1 subfamily. As to quaternary structure, homodimer.

The protein resides in the cytoplasm. It catalyses the reaction tRNA(Pro) + L-proline + ATP = L-prolyl-tRNA(Pro) + AMP + diphosphate. In terms of biological role, catalyzes the attachment of proline to tRNA(Pro) in a two-step reaction: proline is first activated by ATP to form Pro-AMP and then transferred to the acceptor end of tRNA(Pro). As ProRS can inadvertently accommodate and process non-cognate amino acids such as alanine and cysteine, to avoid such errors it has two additional distinct editing activities against alanine. One activity is designated as 'pretransfer' editing and involves the tRNA(Pro)-independent hydrolysis of activated Ala-AMP. The other activity is designated 'posttransfer' editing and involves deacylation of mischarged Ala-tRNA(Pro). The misacylated Cys-tRNA(Pro) is not edited by ProRS. The sequence is that of Proline--tRNA ligase 1 from Bacillus thuringiensis subsp. konkukian (strain 97-27).